Consider the following 451-residue polypeptide: Phosphoglucosamine mutase (451 aa).

Serine 102 serves as the catalytic Phosphoserine intermediate. Positions 102, 242, 244, and 246 each coordinate Mg(2+). A Phosphoserine modification is found at serine 102.

This sequence belongs to the phosphohexose mutase family. The cofactor is Mg(2+). Post-translationally, activated by phosphorylation.

The enzyme catalyses alpha-D-glucosamine 1-phosphate = D-glucosamine 6-phosphate. Functionally, catalyzes the conversion of glucosamine-6-phosphate to glucosamine-1-phosphate. This chain is Phosphoglucosamine mutase, found in Staphylococcus aureus (strain USA300).